Here is a 311-residue protein sequence, read N- to C-terminus: Ribonuclease Z (311 aa).

Positions 61, 63, 65, 66, 137, 207, and 263 each coordinate Zn(2+). The active-site Proton acceptor is the Asp-65.

This sequence belongs to the RNase Z family. As to quaternary structure, homodimer. The cofactor is Zn(2+).

It catalyses the reaction Endonucleolytic cleavage of RNA, removing extra 3' nucleotides from tRNA precursor, generating 3' termini of tRNAs. A 3'-hydroxy group is left at the tRNA terminus and a 5'-phosphoryl group is left at the trailer molecule.. Its function is as follows. Zinc phosphodiesterase, which displays some tRNA 3'-processing endonuclease activity. Probably involved in tRNA maturation, by removing a 3'-trailer from precursor tRNA. The polypeptide is Ribonuclease Z (Thermococcus onnurineus (strain NA1)).